The sequence spans 314 residues: DegV domain-containing protein XCC3382 (314 aa).

Residues isoleucine 3 to alanine 307 form the DegV domain. Hexadecanoate contacts are provided by threonine 63 and serine 96.

Functionally, may bind long-chain fatty acids, such as palmitate, and may play a role in lipid transport or fatty acid metabolism. This Xanthomonas campestris pv. campestris (strain ATCC 33913 / DSM 3586 / NCPPB 528 / LMG 568 / P 25) protein is DegV domain-containing protein XCC3382.